The sequence spans 298 residues: Lipoyl synthase (298 aa).

Positions 40, 45, 51, 67, 71, 74, and 280 each coordinate [4Fe-4S] cluster. Positions 53 to 269 (AVRKTATFMI…KEIALSKGFS (217 aa)) constitute a Radical SAM core domain.

The protein belongs to the radical SAM superfamily. Lipoyl synthase family. Requires [4Fe-4S] cluster as cofactor.

The protein resides in the cytoplasm. The catalysed reaction is [[Fe-S] cluster scaffold protein carrying a second [4Fe-4S](2+) cluster] + N(6)-octanoyl-L-lysyl-[protein] + 2 oxidized [2Fe-2S]-[ferredoxin] + 2 S-adenosyl-L-methionine + 4 H(+) = [[Fe-S] cluster scaffold protein] + N(6)-[(R)-dihydrolipoyl]-L-lysyl-[protein] + 4 Fe(3+) + 2 hydrogen sulfide + 2 5'-deoxyadenosine + 2 L-methionine + 2 reduced [2Fe-2S]-[ferredoxin]. It participates in protein modification; protein lipoylation via endogenous pathway; protein N(6)-(lipoyl)lysine from octanoyl-[acyl-carrier-protein]. Its function is as follows. Catalyzes the radical-mediated insertion of two sulfur atoms into the C-6 and C-8 positions of the octanoyl moiety bound to the lipoyl domains of lipoate-dependent enzymes, thereby converting the octanoylated domains into lipoylated derivatives. The polypeptide is Lipoyl synthase (Bacillus mycoides (strain KBAB4) (Bacillus weihenstephanensis)).